The chain runs to 847 residues: Capsid-associated protein AC83 (847 aa).

An N-terminal signal peptide occupies residues 1–19 (MMSGVMLLMLAIFLIIAFT). The C2HC BV-type zinc finger occupies 148-197 (CVPVPPCDNKSAGLYPMDERLLDTLVLNQHLDKDYSTNAHLYHPTFYLRC). 2 N-linked (GlcNAc...) asparagine; by host glycosylation sites follow: N156 and N211. 2 disulfide bridges follow: C208/C221 and C261/C274. The 59-residue stretch at 224–282 (NELCENRPDGYILSYFPSNLLVNQFMQCVNGRHVVGECPANKIFDRNLMSCVEAHPCAF) folds into the Chitin-binding type-2 domain. N306, N337, N500, N592, N613, and N639 each carry an N-linked (GlcNAc...) asparagine; by host glycan. Residues 665-698 (DHWVVAPPTAPPPPPEPEPEPEPEPEPEPELPSP) form a disordered region. The span at 681–693 (PEPEPEPEPEPEP) shows a compositional bias: acidic residues.

It is found in the virion. Plays an essential role in nucleocapsid assembly. Essential for the establishment of efficient per os infection. The polypeptide is Capsid-associated protein AC83 (p95) (Autographa californica nuclear polyhedrosis virus (AcMNPV)).